A 392-amino-acid chain; its full sequence is Formate-dependent phosphoribosylglycinamide formyltransferase (392 aa).

N(1)-(5-phospho-beta-D-ribosyl)glycinamide-binding positions include 20-21 and Glu-80; that span reads EL. Residues Arg-112, Lys-153, 158–163, 193–196, and Glu-201 contribute to the ATP site; these read SSGKGQ and EGFV. The ATP-grasp domain maps to 117 to 306; the sequence is RLAAETLGLP…EFALHVRAIL (190 aa). Residues Glu-265 and Glu-277 each contribute to the Mg(2+) site. Residues Asp-284, Lys-355, and 362-363 contribute to the N(1)-(5-phospho-beta-D-ribosyl)glycinamide site; that span reads RR.

The protein belongs to the PurK/PurT family. Homodimer.

It carries out the reaction N(1)-(5-phospho-beta-D-ribosyl)glycinamide + formate + ATP = N(2)-formyl-N(1)-(5-phospho-beta-D-ribosyl)glycinamide + ADP + phosphate + H(+). Its pathway is purine metabolism; IMP biosynthesis via de novo pathway; N(2)-formyl-N(1)-(5-phospho-D-ribosyl)glycinamide from N(1)-(5-phospho-D-ribosyl)glycinamide (formate route): step 1/1. In terms of biological role, involved in the de novo purine biosynthesis. Catalyzes the transfer of formate to 5-phospho-ribosyl-glycinamide (GAR), producing 5-phospho-ribosyl-N-formylglycinamide (FGAR). Formate is provided by PurU via hydrolysis of 10-formyl-tetrahydrofolate. This Aeromonas hydrophila subsp. hydrophila (strain ATCC 7966 / DSM 30187 / BCRC 13018 / CCUG 14551 / JCM 1027 / KCTC 2358 / NCIMB 9240 / NCTC 8049) protein is Formate-dependent phosphoribosylglycinamide formyltransferase.